A 619-amino-acid polypeptide reads, in one-letter code: Sodium-dependent dopamine transporter (619 aa).

Residues 1–56 (MSKSKCSVGPMSSVVAPAKESNAVGPREVELILVKEQNGVQLTNSTLINPPQTPVE) are Cytoplasmic-facing. The discontinuously helical transmembrane segment at 57 to 95 (AQERETWSKKIDFLLSVIGFAVDLANVWRFPYLCYKNGG) threads the bilayer. Residues Gly75, Ala77, Val78, Asp79, and Asn82 each contribute to the Na(+) site. Asp79 contacts dopamine. Helical transmembrane passes span 96 to 127 (GAFL…NREG) and 128 to 171 (AAGV…FSSF). 2 residues coordinate dopamine: Ser149 and Gly153. Topologically, residues 172–235 (TMDLPWIHCN…SRGIDDLGPP (64 aa)) are extracellular. Cys180 and Cys189 form a disulfide bridge. N-linked (GlcNAc...) asparagine glycans are attached at residues Asn181, Asn188, Asn196, and Asn204. 2 consecutive transmembrane segments (helical) span residues 236–255 (RWQL…FSLW) and 256–286 (KGVK…GVTL). Residues 287 to 305 (PGAMDGIRAYLSVDFYRLC) are Extracellular-facing. A discontinuously helical membrane pass occupies residues 306–334 (EASVWIDAATQVCFSLGVGFGVLIAFSSY). Gln316 is a chloride binding site. Residue Phe319 participates in dopamine binding. Na(+) contacts are provided by Ser320 and Asn352. Ser320 provides a ligand contact to chloride. A helical transmembrane segment spans residues 335 to 375 (NKFTNNCYRDAIITTSINSLTSFSSGFVVFSFLGYMAQKHN). Ser356 is a binding site for chloride. Residues 376–399 (VPIRDVATDGPGLIFIIYPEAIAT) lie on the Extracellular side of the membrane. Helical transmembrane passes span 400–441 (LPLS…QLLH), 442–465 (RHRE…CVTN), and 466–498 (GGIY…AWFY). Na(+)-binding residues include Leu417, Asp420, and Ser421. Residues Ser421 and Ala422 each coordinate dopamine. Residues 499–515 (GVQQFSDDIKQMTGQRP) are Cytoplasmic-facing. Residues 516–541 (NLYWRLCWKLVSPCFLLYVVVVSIVT) traverse the membrane as a helical segment. Over 542–552 (FRPPHYGAYIF) the chain is Extracellular. Residues 553–582 (PDWANALGWIIATSSMAMVPIYATYKFCSL) form a helical membrane-spanning segment. The tract at residues 560–589 (GWIIATSSMAMVPIYATYKFCSLPGSFREK) is interaction with TGFB1I1. Topologically, residues 583 to 619 (PGSFREKLAYAITPEKDHQLVDRGEVRQFTLRHWLLL) are cytoplasmic.

It belongs to the sodium:neurotransmitter symporter (SNF) (TC 2.A.22) family. SLC6A3 subfamily. As to quaternary structure, monomer. Homooligomer; disulfide-linked. Interacts with PRKCABP and TGFB1I1. Interacts (via N-terminus) with SYNGR3 (via N-terminus). Interacts with SLC18A2. Interacts with TOR1A (ATP-bound); TOR1A regulates SLC6A3 subcellular location. Interacts with alpha-synuclein/SNCA. Interacts with SEPTIN4. Brain. Expressed in the substantia nigra and ventral tegmental area, regions that contain dopaminergic cell bodies.

It is found in the cell membrane. It localises to the cell projection. The protein resides in the neuron projection. Its subcellular location is the axon. It catalyses the reaction dopamine(out) + chloride(out) + Na(+)(out) = dopamine(in) + chloride(in) + Na(+)(in). It carries out the reaction (R)-noradrenaline(out) + chloride(out) + Na(+)(out) = (R)-noradrenaline(in) + chloride(in) + Na(+)(in). The catalysed reaction is dopamine(out) + chloride(out) + 2 Na(+)(out) = dopamine(in) + chloride(in) + 2 Na(+)(in). With respect to regulation, inhibited by mazindol, cocaine, desipramine, GBR 12783 dihydrochloride, GBR 12909 dihydrochloride and nomifensine. Inhibited by zinc ions. In terms of biological role, mediates sodium- and chloride-dependent transport of dopamine. Also mediates sodium- and chloride-dependent transport of norepinephrine (also known as noradrenaline). Regulator of light-dependent retinal hyaloid vessel regression, downstream of OPN5 signaling. The chain is Sodium-dependent dopamine transporter (Slc6a3) from Rattus norvegicus (Rat).